The sequence spans 161 residues: Phosphohistidine phosphatase SixA (161 aa).

The protein belongs to the SixA phosphatase family.

Functionally, exhibits phosphohistidine phosphatase activity towards the HPt domain of the ArcB sensor involved in the multistep His-Asp phosphorelay. The chain is Phosphohistidine phosphatase SixA (sixA) from Escherichia coli (strain K12).